We begin with the raw amino-acid sequence, 478 residues long: Growth/differentiation factor 10 (478 aa).

A signal peptide spans 1–33; it reads MARGPARTSLGPGSQQLPLLSLLLLLLLRDADG. The segment at 34-70 is disordered; it reads SHTAAARPPPPAAADGLAGDKNPQRSPGDVAAAQSPG. Positions 34–368 are excised as a propeptide; sequence SHTAAARPPP…EKTMQKARKK (335 aa). N-linked (GlcNAc...) asparagine glycans are attached at residues asparagine 118, asparagine 155, and asparagine 280. Residues 267–345 are disordered; the sequence is PFQAGDPEPG…GRKDRRKKGQ (79 aa). Polar residues predominate over residues 291-301; that stretch reads TQATGPLQNNE. Positions 331-343 are enriched in basic residues; it reads LKPRPGRKDRRKK. 3 disulfides stabilise this stretch: cysteine 376–cysteine 443, cysteine 405–cysteine 475, and cysteine 409–cysteine 477. N-linked (GlcNAc...) asparagine glycosylation occurs at asparagine 469.

It belongs to the TGF-beta family. Homodimer or heterodimer. Can form a non-covalent complex of the mature region and the pro-region.

The protein localises to the secreted. Its function is as follows. Growth factor involved in osteogenesis and adipogenesis. Plays an inhibitory role in the process of osteoblast differentiation via SMAD2/3 pathway. Plays an inhibitory role in the process of adipogenesis. The sequence is that of Growth/differentiation factor 10 (GDF10) from Bos taurus (Bovine).